Here is a 527-residue protein sequence, read N- to C-terminus: Protein TIC 56, chloroplastic (527 aa).

Residues 1–48 constitute a chloroplast transit peptide; it reads MSSMNFNPFQNWFEKPPNPVPSINFVSLADSFFPKSQSPNFASIGLPK. The interval 43-67 is disordered; it reads SIGLPKFSKKSPKPETAGTDEPGPY. Asn350 is subject to Deamidated asparagine. Residues 491-508 are compositionally biased toward basic and acidic residues; the sequence is RREEELREEDLKHYSGRT. The tract at residues 491-527 is disordered; it reads RREEELREEDLKHYSGRTDEDEEEEEEEDDDSNSKKD. Acidic residues predominate over residues 509–521; the sequence is DEDEEEEEEEDDD.

In terms of assembly, part of the Tic complex. Component of the 1-MD complex, composed of TIC20-I, TIC214, TIC100 and TIC56. Interacts with the translocating preproteins. Hydrolysis of ATP is essential for the formation of this complex. The 1-MD complex interacts with TIC21.

The protein resides in the plastid. It is found in the chloroplast inner membrane. Its function is as follows. Involved in protein precursor import into chloroplasts. May be part of an intermediate translocation complex acting as a protein-conducting channel at the inner envelope. The sequence is that of Protein TIC 56, chloroplastic from Arabidopsis thaliana (Mouse-ear cress).